Consider the following 178-residue polypeptide: Interleukin-10 (178 aa).

The N-terminal stretch at Met-1–Pro-18 is a signal peptide. 2 disulfide bridges follow: Cys-30-Cys-126 and Cys-80-Cys-132. The N-linked (GlcNAc...) asparagine glycan is linked to Asn-134.

The protein belongs to the IL-10 family. As to quaternary structure, homodimer. Interacts with IL10RA and IL10RB.

The protein resides in the secreted. In terms of biological role, major immune regulatory cytokine that acts on many cells of the immune system where it has profound anti-inflammatory functions, limiting excessive tissue disruption caused by inflammation. Mechanistically, IL10 binds to its heterotetrameric receptor comprising IL10RA and IL10RB leading to JAK1 and STAT2-mediated phosphorylation of STAT3. In turn, STAT3 translocates to the nucleus where it drives expression of anti-inflammatory mediators. Targets antigen-presenting cells (APCs) such as macrophages and monocytes and inhibits their release of pro-inflammatory cytokines including granulocyte-macrophage colony-stimulating factor /GM-CSF, granulocyte colony-stimulating factor/G-CSF, IL-1 alpha, IL-1 beta, IL-6, IL-8 and TNF-alpha. Also interferes with antigen presentation by reducing the expression of MHC-class II and co-stimulatory molecules, thereby inhibiting their ability to induce T cell activation. In addition, controls the inflammatory response of macrophages by reprogramming essential metabolic pathways including mTOR signaling. The sequence is that of Interleukin-10 (IL10) from Meriones unguiculatus (Mongolian jird).